The primary structure comprises 99 residues: Protein translation factor SUI1 homolog (99 aa).

Belongs to the SUI1 family.

The chain is Protein translation factor SUI1 homolog from Picrophilus torridus (strain ATCC 700027 / DSM 9790 / JCM 10055 / NBRC 100828 / KAW 2/3).